A 472-amino-acid chain; its full sequence is Ammonium transporter Rh type C (472 aa).

The Cytoplasmic segment spans residues 1–9 (MAWNTNLRW). A helical membrane pass occupies residues 10–30 (RLPLTCLLLEVVMVILFGVFV). Residues 31–51 (RYDFDADAHWWSWRTEFYYRY) are Extracellular-facing. The chain crosses the membrane as a helical span at residues 52–72 (PSFQDVHVMVFVGFGFLMTFL). At 73-76 (QRYG) the chain is on the cytoplasmic side. A helical transmembrane segment spans residues 77-97 (FSAVGFNFLLAAFGIQWALLM). Over 98-114 (QGWFHFLQGRYIVVGVE) the chain is Extracellular. A helical transmembrane segment spans residues 115–135 (NLINADFCVASVCVAFGAVLG). Over 136–139 (KVSP) the chain is Cytoplasmic. Residues 140–160 (IQLLIMTFFQVTLFAVNEFIL) form a helical membrane-spanning segment. Over 161–168 (LNLLKVKD) the chain is Extracellular. Residues 169–191 (AGGSMTIHTFGAYFGLTVTRILY) traverse the membrane as a helical segment. Over 192 to 209 (RRNLEQSKERQNSVYQSD) the chain is Cytoplasmic. A helical membrane pass occupies residues 210 to 230 (LFAMIGTLFLWMYWPSFNSAI). The Extracellular portion of the chain corresponds to 231-241 (SYHGDSQHRAA). A helical transmembrane segment spans residues 242–262 (INTYCSLAACVLTSVAISSAL). Topologically, residues 263–294 (HKKGKLDMVHIQNATPAGGVAVGTAAEMMLMP) are cytoplasmic. Residues 295–315 (YGALIVGFVCGIISTLGFVYL) traverse the membrane as a helical segment. Over 316-336 (TPFLESRLHIQDTCGINNLHG) the chain is Extracellular. The helical transmembrane segment at 337-357 (IPGIIGGIVGAVTAASASLEV) threads the bilayer. Topologically, residues 358–388 (YGKEGLVHSFDFQGFKRDWTARTQGKFQIYG) are cytoplasmic. A helical membrane pass occupies residues 389-409 (LLVTLAMALMGGIIVGVGLIL). Residues 410-450 (RLPFWGQPSDENCFEDAVYWEMPEGNSTVYIPEDPTFKPSG) lie on the Extracellular side of the membrane. Asn435 is a glycosylation site (N-linked (GlcNAc...) asparagine). A helical membrane pass occupies residues 451–471 (PSVPSVPMVSPLPMASSVPLV). Position 472 (Pro472) is a topological domain, cytoplasmic.

Belongs to the ammonium transporter (TC 2.A.49) family. Rh subfamily. In terms of assembly, homotrimer. Post-translationally, N-glycosylated.

The protein localises to the cell membrane. Its subcellular location is the apical cell membrane. The catalysed reaction is NH4(+)(in) = NH4(+)(out). The enzyme catalyses methylamine(out) = methylamine(in). It catalyses the reaction CO2(out) = CO2(in). Its function is as follows. Ammonium transporter involved in the maintenance of acid-base homeostasis. Transports ammonium and its related derivative methylammonium across the plasma membrane of epithelial cells likely contributing to renal transepithelial ammonia transport and ammonia metabolism. Postulated to primarily mediate an electroneutral bidirectional transport of NH3 ammonia species according to a mechanism that implies interaction of an NH4(+) ion with acidic residues of the pore entry followed by dissociation of NH4(+) into NH3 and H(+). As a result NH3 transits through the central pore and is protonated on the extracellular side reforming NH4(+). May act as a CO2 channel providing for renal acid secretion. This chain is Ammonium transporter Rh type C (RHCG), found in Pongo abelii (Sumatran orangutan).